We begin with the raw amino-acid sequence, 299 residues long: tRNA dimethylallyltransferase (299 aa).

Residue 13 to 20 participates in ATP binding; the sequence is GPTASGKT. 15-20 is a substrate binding site; the sequence is TASGKT. The tract at residues 38–41 is interaction with substrate tRNA; the sequence is DSRQ.

It belongs to the IPP transferase family. Monomer. Requires Mg(2+) as cofactor.

It catalyses the reaction adenosine(37) in tRNA + dimethylallyl diphosphate = N(6)-dimethylallyladenosine(37) in tRNA + diphosphate. Catalyzes the transfer of a dimethylallyl group onto the adenine at position 37 in tRNAs that read codons beginning with uridine, leading to the formation of N6-(dimethylallyl)adenosine (i(6)A). In Prochlorococcus marinus (strain SARG / CCMP1375 / SS120), this protein is tRNA dimethylallyltransferase.